A 94-amino-acid chain; its full sequence is Defensin alpha 5 (94 aa).

Residues 1 to 19 (MRTIAILAAILLVALQAQA) form the signal peptide. Disulfide bonds link cysteine 65/cysteine 93, cysteine 67/cysteine 82, and cysteine 72/cysteine 92.

Belongs to the alpha-defensin family. In terms of assembly, homodimer. Homotetramer. Interacts with B.antracis lef/lethal factor. Glycosylated. In terms of processing, proteolytically cleaved at Arg-62 by trypsin. Both the propeptide form proHD5/HD5(20-94) and HD5(56-94) are cleaved into the lumenal peptide form HD5(63-94) by trypsin. Unprocessed proHD5 exerts antimicrobial activities, but peptide potency is enhanced by peptide processing. Proteolytically cleaved in duodenal fluid; derived fragments are antimicrobially active against commensal bacteria (in vitro). Post-translationally, (Microbial infection) The disulfide bridges and homodimerization are a prerequisite for the enhancement of S.flexneri adhesion and invasion. Expressed in the gastrointestinal, reproductive, and urinary tracts (at protein level). Expressed in Paneth cells of the small intestine (at protein level). Expressed throughout the urothelium of the lower urinary tract and in the collecting tubules of the kidney (at protein level). Expressed in stratified squamous epithelial cells of the female genital tract epithelia, such as in vagina, ectocervix, endocervix, endometrium, and fallopian tube (at protein level). Endometrial expression correlates with stages of the menstrual cycle: Expression is low during the early proliferative phase, increased during the mid- to late proliferative phase, peaks during the early secretory phase of the cycle, and decreases during the mid- to late secretory phase.

Its subcellular location is the secreted. The protein resides in the cytoplasmic vesicle. The protein localises to the secretory vesicle. Its function is as follows. Host-defense peptide that maintains sterility in the urogenital system. Has antimicrobial activity against a wide range of bacteria, including Gram-negative E.coli, P.aeruginosa and S.typhimurium, and Gram-positive E.aerogenes, S.aureus, B.cereus, E.faecium and L.monocytogenes. Confers resistance to intestinal infection by S.typhimurium. Exhibits antimicrobial activity against enteric commensal bacteria such as B.adolescentis, L.acidophilus, B.breve, L.fermentum, B.longum and S.thermophilus. Binds to bacterial membranes and causes membrane disintegration. Induces the secretion of the chemokine IL-8 by intestinal epithelial cells. Binds to B.antracis lef/lethal factor, a major virulence factor from B.anthracis, and neutralizes its enzymatic activity. Functionally, (Microbial infection) Acts as a target for S.flexneri infection by binding to the bacterium, possibly via bacterial surface proteins, and thereby augmenting infectivity via enhanced bacterial adhesion and invasion of epithelial cells and tissues. The chain is Defensin alpha 5 (DEFA5) from Homo sapiens (Human).